Reading from the N-terminus, the 327-residue chain is GMP reductase (327 aa).

C175 acts as the Thioimidate intermediate in catalysis. NADP(+) is bound at residue 204 to 227 (IIADGGIRTHGDVAKSIRFGATMV).

It belongs to the IMPDH/GMPR family. GuaC type 2 subfamily.

The catalysed reaction is IMP + NH4(+) + NADP(+) = GMP + NADPH + 2 H(+). Functionally, catalyzes the irreversible NADPH-dependent deamination of GMP to IMP. It functions in the conversion of nucleobase, nucleoside and nucleotide derivatives of G to A nucleotides, and in maintaining the intracellular balance of A and G nucleotides. The sequence is that of GMP reductase from Bacillus cereus (strain ATCC 10987 / NRS 248).